Here is a 125-residue protein sequence, read N- to C-terminus: UPF0102 protein PSPA7_4996 (125 aa).

It belongs to the UPF0102 family.

In Pseudomonas paraeruginosa (strain DSM 24068 / PA7) (Pseudomonas aeruginosa (strain PA7)), this protein is UPF0102 protein PSPA7_4996.